The sequence spans 124 residues: Small ribosomal subunit protein uS13 (124 aa).

The interval 94–124 (RGLPVRGQRTKTNARTRKGPKRTIAGKKKAR) is disordered.

The protein belongs to the universal ribosomal protein uS13 family. In terms of assembly, part of the 30S ribosomal subunit. Forms a loose heterodimer with protein S19. Forms two bridges to the 50S subunit in the 70S ribosome.

In terms of biological role, located at the top of the head of the 30S subunit, it contacts several helices of the 16S rRNA. In the 70S ribosome it contacts the 23S rRNA (bridge B1a) and protein L5 of the 50S subunit (bridge B1b), connecting the 2 subunits; these bridges are implicated in subunit movement. Contacts the tRNAs in the A and P-sites. This is Small ribosomal subunit protein uS13 from Mycolicibacterium vanbaalenii (strain DSM 7251 / JCM 13017 / BCRC 16820 / KCTC 9966 / NRRL B-24157 / PYR-1) (Mycobacterium vanbaalenii).